The sequence spans 272 residues: Soluble interferon gamma receptor OPG193 (272 aa).

The signal sequence occupies residues 1-13 (MRYIIILAVLFIN). Asn42, Asn150, and Asn267 each carry an N-linked (GlcNAc...) asparagine; by host glycan.

The protein belongs to the type II cytokine receptor family. In terms of assembly, homodimer. Interacts with host IFNG.

It localises to the secreted. In terms of biological role, counteracts the antiviral effects of host IFN-gamma. Acts as a soluble IFN-gamma receptor and thus inhibits the interaction between host IFN-gamma and its receptor. The polypeptide is Soluble interferon gamma receptor OPG193 (OPG193) (Homo sapiens (Human)).